The primary structure comprises 898 residues: Protein SOV1, mitochondrial (898 aa).

The N-terminal 31 residues, 1-31 (MFKYNRSLCSSALIAKSQIRFYRLKRAPLNY), are a transit peptide targeting the mitochondrion.

The protein localises to the mitochondrion. The protein is Protein SOV1, mitochondrial (SOV1) of Saccharomyces cerevisiae (strain ATCC 204508 / S288c) (Baker's yeast).